Reading from the N-terminus, the 663-residue chain is UvrABC system protein B (663 aa).

Basic and acidic residues predominate over residues 1 to 10; the sequence is MIDKRDDKPF. The tract at residues 1–23 is disordered; sequence MIDKRDDKPFKLKSKYKPSGDQP. The Helicase ATP-binding domain occupies 31-418; that stretch reads DNIEGGEKAQ…TNTIIEQIIR (388 aa). 44 to 51 contributes to the ATP binding site; it reads GATGTGKT. The Beta-hairpin signature appears at 97 to 120; sequence YYDYYQPEAYVPSSDTYIEKDSSV. One can recognise a Helicase C-terminal domain in the interval 435 to 601; the sequence is QMDDLLGEIN…TIKKDIRGLI (167 aa). Residues 627–662 form the UVR domain; the sequence is KEAINALQKQMQEAAELLDFELAAQMRDLILELKLM.

This sequence belongs to the UvrB family. In terms of assembly, forms a heterotetramer with UvrA during the search for lesions. Interacts with UvrC in an incision complex.

It is found in the cytoplasm. In terms of biological role, the UvrABC repair system catalyzes the recognition and processing of DNA lesions. A damage recognition complex composed of 2 UvrA and 2 UvrB subunits scans DNA for abnormalities. Upon binding of the UvrA(2)B(2) complex to a putative damaged site, the DNA wraps around one UvrB monomer. DNA wrap is dependent on ATP binding by UvrB and probably causes local melting of the DNA helix, facilitating insertion of UvrB beta-hairpin between the DNA strands. Then UvrB probes one DNA strand for the presence of a lesion. If a lesion is found the UvrA subunits dissociate and the UvrB-DNA preincision complex is formed. This complex is subsequently bound by UvrC and the second UvrB is released. If no lesion is found, the DNA wraps around the other UvrB subunit that will check the other stand for damage. This is UvrABC system protein B from Streptococcus pyogenes serotype M1.